Reading from the N-terminus, the 198-residue chain is Recombination protein RecR (198 aa).

The segment at 57–72 adopts a C4-type zinc-finger fold; the sequence is CLNCGCLTDEAACYFC. The Toprim domain occupies 80 to 175; it reads QIICVTAFPR…QISRLAFGLP (96 aa).

Belongs to the RecR family.

In terms of biological role, may play a role in DNA repair. It seems to be involved in an RecBC-independent recombinational process of DNA repair. It may act with RecF and RecO. The protein is Recombination protein RecR of Protochlamydia amoebophila (strain UWE25).